The chain runs to 251 residues: Small ribosomal subunit protein uS2 (251 aa).

The tract at residues 232 to 251 (LQTGEEEMAAAEGESEQVEA) is disordered. Positions 235–251 (GEEEMAAAEGESEQVEA) are enriched in acidic residues.

It belongs to the universal ribosomal protein uS2 family.

The sequence is that of Small ribosomal subunit protein uS2 from Geobacter metallireducens (strain ATCC 53774 / DSM 7210 / GS-15).